The sequence spans 127 residues: Fluoride-specific ion channel FluC (127 aa).

The next 4 helical transmembrane spans lie at Ser-4–Met-24, Pro-35–Phe-55, Leu-68–Val-88, and Ile-96–Ala-116. The Na(+) site is built by Gly-75 and Thr-78.

It belongs to the fluoride channel Fluc/FEX (TC 1.A.43) family.

It localises to the cell inner membrane. The catalysed reaction is fluoride(in) = fluoride(out). Its activity is regulated as follows. Na(+) is not transported, but it plays an essential structural role and its presence is essential for fluoride channel function. In terms of biological role, fluoride-specific ion channel. Important for reducing fluoride concentration in the cell, thus reducing its toxicity. The chain is Fluoride-specific ion channel FluC from Pseudomonas putida (strain W619).